We begin with the raw amino-acid sequence, 417 residues long: Serine hydroxymethyltransferase 4 (417 aa).

Residues L121 and 125–127 (GHL) contribute to the (6S)-5,6,7,8-tetrahydrofolate site. K230 is modified (N6-(pyridoxal phosphate)lysine). 355-357 (SPF) provides a ligand contact to (6S)-5,6,7,8-tetrahydrofolate.

This sequence belongs to the SHMT family. As to quaternary structure, homodimer. Pyridoxal 5'-phosphate serves as cofactor.

Its subcellular location is the cytoplasm. It catalyses the reaction (6R)-5,10-methylene-5,6,7,8-tetrahydrofolate + glycine + H2O = (6S)-5,6,7,8-tetrahydrofolate + L-serine. The protein operates within one-carbon metabolism; tetrahydrofolate interconversion. It functions in the pathway amino-acid biosynthesis; glycine biosynthesis; glycine from L-serine: step 1/1. Functionally, catalyzes the reversible interconversion of serine and glycine with tetrahydrofolate (THF) serving as the one-carbon carrier. This reaction serves as the major source of one-carbon groups required for the biosynthesis of purines, thymidylate, methionine, and other important biomolecules. Also exhibits THF-independent aldolase activity toward beta-hydroxyamino acids, producing glycine and aldehydes, via a retro-aldol mechanism. The polypeptide is Serine hydroxymethyltransferase 4 (Colwellia psychrerythraea (strain 34H / ATCC BAA-681) (Vibrio psychroerythus)).